Here is an 865-residue protein sequence, read N- to C-terminus: Taste receptor type 1 member 3 (865 aa).

A signal peptide spans 1–24 (MPGLALLGLTALLGLTALLDHGEG). Residues 25-573 (ATSCLSQQLR…FLAWGEPAVL (549 aa)) are Extracellular-facing. N-linked (GlcNAc...) asparagine glycosylation is found at Asn134 and Asn267. A helical membrane pass occupies residues 574-594 (LLLALLALALGLALAALGLFL). Residues 595–606 (WHSDSPLVQASG) are Cytoplasmic-facing. A helical transmembrane segment spans residues 607 to 627 (GPRACFGLACLGLVCLSVLLF). Residues 628-642 (PGQPGPASCLAQQPL) are Extracellular-facing. A helical membrane pass occupies residues 643–663 (FHLPLTGCLSTFFLQAAEIFV). The Cytoplasmic portion of the chain corresponds to 664–685 (GSELPPSWAEKMRGRLRGPWAW). The chain crosses the membrane as a helical span at residues 686-706 (LVVLLAMLAEAALCAWYLVAF). Topologically, residues 707-732 (PPEVVTDWRVLPTEALVHCHVHSWIS) are extracellular. Residues 733 to 753 (FGLVHATNAMLAFLCFLGTFL) traverse the membrane as a helical segment. Over 754–765 (VQSRPGRYNGAR) the chain is Cytoplasmic. The helical transmembrane segment at 766–786 (GLTFAMLAYFITWISFVPLFA) threads the bilayer. Residues 787-794 (NVHVAYQP) are Extracellular-facing. Residues 795-815 (AVQMGTILLCALGILATFHLP) form a helical membrane-spanning segment. Residues 816 to 865 (KCYLLLQRPELNTPEFFLEDNARAQGSSWGQGRGESGQKQVTPDPVTSPQ) are Cytoplasmic-facing. Residues 840 to 865 (QGSSWGQGRGESGQKQVTPDPVTSPQ) form a disordered region. Positions 852–865 (GQKQVTPDPVTSPQ) are enriched in polar residues.

Belongs to the G-protein coupled receptor 3 family. TAS1R subfamily. In terms of assembly, forms homodimers or a heterodimer with TAS1R1. In terms of tissue distribution, expressed in taste buds.

It is found in the cell membrane. Putative taste receptor. TAS1R1/TAS1R3 responds to the umami taste stimulus (the taste of monosodium glutamate). The sequence is that of Taste receptor type 1 member 3 (TAS1R3) from Felis catus (Cat).